Consider the following 450-residue polypeptide: Molybdate-anion transporter (450 aa).

Transmembrane regions (helical) follow at residues 1-21, 38-58, 79-99, 128-148, 167-187, 191-211, 249-269, 278-298, 311-331, 344-364, 376-396, and 409-429; these read MLVTAYLSFVGLLASCLGLEL, FLQFQLDFYQVYFLALAADWL, ILYVCGLASTVLFGLVASSLV, FVLLVGRALGGLSTALLFSAF, IPATFARAAFWNHVLAVAAGV, AVASWIGLGPVAPFVAAIPLL, VLLLGVIQALFESVIFIFVFL, GAPLGIVFSSFMAASLLGSSL, PMHLLSLAVLIVVFSLFMLTF, FIAFLLIELACGLYFPSMSFL, GVLNWFRVPLHLLACLGLLVL, and FSICSAVMVTTLLAVAGLFTV.

Belongs to the major facilitator superfamily.

It localises to the cell membrane. Functionally, mediates high-affinity intracellular uptake of the rare oligo-element molybdenum. The protein is Molybdate-anion transporter (Mfsd5) of Mus musculus (Mouse).